Consider the following 216-residue polypeptide: Cytidylate kinase (216 aa).

Position 7–15 (7–15) interacts with ATP; the sequence is GPSGTGKST.

It belongs to the cytidylate kinase family. Type 1 subfamily.

The protein resides in the cytoplasm. It catalyses the reaction CMP + ATP = CDP + ADP. The catalysed reaction is dCMP + ATP = dCDP + ADP. In Chlamydia trachomatis serovar D (strain ATCC VR-885 / DSM 19411 / UW-3/Cx), this protein is Cytidylate kinase.